Consider the following 266-residue polypeptide: Indole-3-glycerol phosphate synthase (266 aa).

It belongs to the TrpC family.

The catalysed reaction is 1-(2-carboxyphenylamino)-1-deoxy-D-ribulose 5-phosphate + H(+) = (1S,2R)-1-C-(indol-3-yl)glycerol 3-phosphate + CO2 + H2O. The protein operates within amino-acid biosynthesis; L-tryptophan biosynthesis; L-tryptophan from chorismate: step 4/5. This is Indole-3-glycerol phosphate synthase from Opitutus terrae (strain DSM 11246 / JCM 15787 / PB90-1).